The sequence spans 129 residues: Transcriptional regulator WhiB2 (129 aa).

The tract at residues Ser23–Leu45 is disordered. The 4Fe-4S Wbl-type domain occupies Leu66–Arg123. [4Fe-4S] cluster is bound by residues Cys67, Cys90, Cys93, and Cys99.

It belongs to the WhiB family. It depends on [4Fe-4S] cluster as a cofactor. The Fe-S cluster can be nitrosylated by nitric oxide (NO). Post-translationally, upon Fe-S cluster removal intramolecular disulfide bonds are formed.

The protein localises to the cytoplasm. Its function is as follows. Acts as a transcriptional regulator. Probably redox-responsive. The apo- but not holo-form probably binds DNA. The polypeptide is Transcriptional regulator WhiB2 (whiB2) (Mycolicibacterium smegmatis (strain ATCC 700084 / mc(2)155) (Mycobacterium smegmatis)).